The primary structure comprises 333 residues: Glycerol-3-phosphate dehydrogenase [NAD(P)+] (333 aa).

Trp13, Lys33, and Lys108 together coordinate NADPH. 2 residues coordinate sn-glycerol 3-phosphate: Lys108 and Gly138. Ser142 contributes to the NADPH binding site. The sn-glycerol 3-phosphate site is built by Lys193, Asp246, Ser256, Arg257, and Asn258. The Proton acceptor role is filled by Lys193. Arg257 lines the NADPH pocket. Val281 and Glu283 together coordinate NADPH.

It belongs to the NAD-dependent glycerol-3-phosphate dehydrogenase family.

Its subcellular location is the cytoplasm. It carries out the reaction sn-glycerol 3-phosphate + NAD(+) = dihydroxyacetone phosphate + NADH + H(+). It catalyses the reaction sn-glycerol 3-phosphate + NADP(+) = dihydroxyacetone phosphate + NADPH + H(+). It functions in the pathway membrane lipid metabolism; glycerophospholipid metabolism. Functionally, catalyzes the reduction of the glycolytic intermediate dihydroxyacetone phosphate (DHAP) to sn-glycerol 3-phosphate (G3P), the key precursor for phospholipid synthesis. The sequence is that of Glycerol-3-phosphate dehydrogenase [NAD(P)+] from Bifidobacterium longum (strain NCC 2705).